The primary structure comprises 187 residues: ATP synthase subunit delta, chloroplastic (187 aa).

This sequence belongs to the ATPase delta chain family. In terms of assembly, F-type ATPases have 2 components, F(1) - the catalytic core - and F(0) - the membrane proton channel. F(1) has five subunits: alpha(3), beta(3), gamma(1), delta(1), epsilon(1). CF(0) has four main subunits: a(1), b(1), b'(1) and c(10-14). The alpha and beta chains form an alternating ring which encloses part of the gamma chain. F(1) is attached to F(0) by a central stalk formed by the gamma and epsilon chains, while a peripheral stalk is formed by the delta, b and b' chains.

Its subcellular location is the plastid. The protein localises to the chloroplast thylakoid membrane. In terms of biological role, f(1)F(0) ATP synthase produces ATP from ADP in the presence of a proton or sodium gradient. F-type ATPases consist of two structural domains, F(1) containing the extramembraneous catalytic core and F(0) containing the membrane proton channel, linked together by a central stalk and a peripheral stalk. During catalysis, ATP synthesis in the catalytic domain of F(1) is coupled via a rotary mechanism of the central stalk subunits to proton translocation. This protein is part of the stalk that links CF(0) to CF(1). It either transmits conformational changes from CF(0) to CF(1) or is implicated in proton conduction. The polypeptide is ATP synthase subunit delta, chloroplastic (Trieres chinensis (Marine centric diatom)).